We begin with the raw amino-acid sequence, 248 residues long: DNA polymerase sliding clamp 2 (248 aa).

This sequence belongs to the PCNA family. As to quaternary structure, the subunits circularize to form a toroid; DNA passes through its center. Replication factor C (RFC) is required to load the toroid on the DNA. Forms a dimeric complex with PCNA3 and trimeric complexes PCNA123 and PCNA323; does not form homotrimers. Crystal structures show a heterotetramer of 2 PCNA2 and 2 PCNA3, which would be large enough to clamp a Holliday junction.

Sliding clamp subunit that acts as a moving platform for DNA processing. Responsible for tethering the catalytic subunit of DNA polymerase and other proteins to DNA during high-speed replication. Both trimeric complexes inhibit DNA ligase and both 3'-5' and 5'-3' activity of Hel308 (Hjm) helicase, but stimulate Hjc, the Holliday junction cleavage enzyme. This Sulfurisphaera tokodaii (strain DSM 16993 / JCM 10545 / NBRC 100140 / 7) (Sulfolobus tokodaii) protein is DNA polymerase sliding clamp 2.